A 142-amino-acid chain; its full sequence is HTH-type transcriptional regulator MntR (142 aa).

One can recognise an HTH dtxR-type domain in the interval 1–63 (MPTPSMEDYI…YEKYRGLVLT (63 aa)). 6 residues coordinate Mn(2+): aspartate 8, glutamate 11, histidine 77, glutamate 99, glutamate 102, and histidine 103.

The protein belongs to the DtxR/MntR family. Homodimer.

It localises to the cytoplasm. Its activity is regulated as follows. DNA binding is strongly activated by Mn(2+). Central regulator of manganese homeostasis. This Bacillus mycoides (strain KBAB4) (Bacillus weihenstephanensis) protein is HTH-type transcriptional regulator MntR.